The sequence spans 545 residues: Serine/threonine-protein kinase PAK 1 (545 aa).

The disordered stretch occupies residues 1-75 (MSNNGVDIQD…KKREKERPEI (75 aa)). At serine 2 the chain carries N-acetylserine. Serine 21 bears the Phosphoserine; by PKB and autocatalysis mark. Position 57 is a phosphoserine; by autocatalysis (serine 57). The interval 70–140 (KERPEISLPS…YNSKKTSNSK (71 aa)) is autoregulatory region. The 14-residue stretch at 75–88 (ISLPSDFEHTIHVG) folds into the CRIB domain. A GTPase-binding region spans residues 75-105 (ISLPSDFEHTIHVGFDAVTGEFTGMPEQWAR). Phosphothreonine; by OXSR1 is present on threonine 84. At serine 115 the chain carries Phosphoserine. Tyrosine 131 and tyrosine 142 each carry phosphotyrosine. Phosphoserine; by autocatalysis occurs at positions 144 and 149. A disordered region spans residues 150-198 (AEDYNSSNTLNVKTVSETPAVPPVSEDDEDDDDDATPPPVIAPRPEHTK). Positions 152–166 (DYNSSNTLNVKTVSE) are enriched in polar residues. Phosphotyrosine; by JAK2 is present on tyrosine 153. Serine 174 is modified (phosphoserine). Residues 174-184 (SEDDEDDDDDA) show a composition bias toward acidic residues. Threonine 185 carries the post-translational modification Phosphothreonine. Serine 199 carries the post-translational modification Phosphoserine; by autocatalysis. Tyrosine 201 is modified (phosphotyrosine; by JAK2). Position 204 is a phosphoserine; by autocatalysis (serine 204). Residues 210 to 250 (PVTPTRDVATSPISPTENNTTPPDALTRNTEKQKKKPKMSD) are disordered. Phosphothreonine is present on residues threonine 212 and threonine 219. Residues serine 220 and serine 223 each carry the phosphoserine modification. Over residues 220-231 (SPISPTENNTTP) the composition is skewed to polar residues. 3 positions are modified to phosphothreonine: threonine 225, threonine 229, and threonine 230. Positions 270 to 521 (YTPFEKIGQG…AKELLQHQFL (252 aa)) constitute a Protein kinase domain. 276 to 284 (IGQGASGTV) serves as a coordination point for ATP. Tyrosine 285 carries the post-translational modification Phosphotyrosine; by JAK2. Lysine 299 serves as a coordination point for ATP. Residue aspartate 389 is the Proton acceptor of the active site. Threonine 423 carries the post-translational modification Phosphothreonine; by autocatalysis, BRSK2 and PDPK1.

It belongs to the protein kinase superfamily. STE Ser/Thr protein kinase family. STE20 subfamily. Homodimer in its autoinhibited state. Active as monomer. Interacts with GIT1. Component of cytoplasmic complexes, which also contains PXN, ARHGEF7 and GIT1. Interacts with NISCH. Interacts with DVL1; mediates the formation of a DVL1, MUSK and PAK1 ternary complex involved in AChR clustering. Binds to the caspase-cleaved p110 isoform of CDC2L1 and CDC2L2, p110C, but not the full-length proteins. Interacts with ARHGEF7. Interacts tightly with GTP-bound but not GDP-bound CDC42/P21 and RAC1. Interacts with SCRIB. Interacts with PDPK1. Interacts (via kinase domain) with RAF1. Interacts with NCK1 and NCK2. Interacts with TBCB. Interacts with BRSK2. Interacts with SNAI1. Interacts with CIB1 (via N-terminal region); the interaction is direct, promotes PAK1 activity and occurs in a calcium-dependent manner. Interacts with INPP5K. Interacts with gamma-tubulin. Interacts with RHOU; the interaction promotes PAK1 activation. The cofactor is Mg(2+). Autophosphorylated in trans, meaning that in a dimer, one kinase molecule phosphorylates the other one. Activated by autophosphorylation at Thr-423 in response to a conformation change, triggered by interaction with GTP-bound CDC42 or RAC1. Activated by phosphorylation at Thr-423 by BRSK2 and by PDPK1. Phosphorylated by JAK2 in response to PRL; this increases PAK1 kinase activity. Phosphorylated at Ser-21 by PKB/AKT; this reduces interaction with NCK1 and association with focal adhesion sites. Upon DNA damage, phosphorylated at Thr-212 and translocates to the nucleoplasm. Phosphorylated at tyrosine residues, which can be enhanced by NTN1.

The protein localises to the cytoplasm. It is found in the cell junction. Its subcellular location is the focal adhesion. The protein resides in the cell projection. It localises to the lamellipodium. The protein localises to the cell membrane. It is found in the ruffle membrane. Its subcellular location is the invadopodium. The protein resides in the nucleus. It localises to the nucleoplasm. The protein localises to the chromosome. It is found in the cytoskeleton. Its subcellular location is the microtubule organizing center. The protein resides in the centrosome. The enzyme catalyses L-seryl-[protein] + ATP = O-phospho-L-seryl-[protein] + ADP + H(+). It catalyses the reaction L-threonyl-[protein] + ATP = O-phospho-L-threonyl-[protein] + ADP + H(+). Its activity is regulated as follows. Phosphorylation of Thr-84 by OXSR1 inhibits activation. Activated by binding small G proteins. Binding of GTP-bound CDC42 or RAC1 to the autoregulatory region releases monomers from the autoinhibited dimer, and enables activation by phosphorylation of Thr-423. Protein kinase involved in intracellular signaling pathways downstream of integrins and receptor-type kinases that plays an important role in cytoskeleton dynamics, in cell adhesion, migration, proliferation, apoptosis, mitosis, and in vesicle-mediated transport processes. Can directly phosphorylate BAD and protects cells against apoptosis. Activated by interaction with CDC42 and RAC1. Functions as a GTPase effector that links the Rho-related GTPases CDC42 and RAC1 to the JNK MAP kinase pathway. Phosphorylates and activates MAP2K1, and thereby mediates activation of downstream MAP kinases. Involved in the reorganization of the actin cytoskeleton, actin stress fibers and of focal adhesion complexes. Phosphorylates the tubulin chaperone TBCB and thereby plays a role in the regulation of microtubule biogenesis and organization of the tubulin cytoskeleton. Plays a role in the regulation of insulin secretion in response to elevated glucose levels. Part of a ternary complex that contains PAK1, DVL1 and MUSK that is important for MUSK-dependent regulation of AChR clustering during the formation of the neuromuscular junction (NMJ). Activity is inhibited in cells undergoing apoptosis, potentially due to binding of CDC2L1 and CDC2L2. Phosphorylates MYL9/MLC2. Phosphorylates RAF1 at 'Ser-338' and 'Ser-339' resulting in: activation of RAF1, stimulation of RAF1 translocation to mitochondria, phosphorylation of BAD by RAF1, and RAF1 binding to BCL2. Phosphorylates SNAI1 at 'Ser-246' promoting its transcriptional repressor activity by increasing its accumulation in the nucleus. In podocytes, promotes NR3C2 nuclear localization. Required for atypical chemokine receptor ACKR2-induced phosphorylation of LIMK1 and cofilin (CFL1) and for the up-regulation of ACKR2 from endosomal compartment to cell membrane, increasing its efficiency in chemokine uptake and degradation. In synapses, seems to mediate the regulation of F-actin cluster formation performed by SHANK3, maybe through CFL1 phosphorylation and inactivation. Plays a role in RUFY3-mediated facilitating gastric cancer cells migration and invasion. In response to DNA damage, phosphorylates MORC2 which activates its ATPase activity and facilitates chromatin remodeling. In neurons, plays a crucial role in regulating GABA(A) receptor synaptic stability and hence GABAergic inhibitory synaptic transmission through its role in F-actin stabilization. In hippocampal neurons, necessary for the formation of dendritic spines and excitatory synapses; this function is dependent on kinase activity and may be exerted by the regulation of actomyosin contractility through the phosphorylation of myosin II regulatory light chain (MLC). Along with GIT1, positively regulates microtubule nucleation during interphase. Phosphorylates FXR1, promoting its localization to stress granules and activity. Phosphorylates ILK on 'Thr-173' and 'Ser-246', promoting nuclear export of ILK. This Mus musculus (Mouse) protein is Serine/threonine-protein kinase PAK 1.